We begin with the raw amino-acid sequence, 144 residues long: Putative acetyltransferase SAOUHSC_00995 (144 aa).

The N-acetyltransferase domain occupies 1-141 (MFSKVNNQKM…EHIEMTKKLT (141 aa)). CoA-binding positions include 71-73 (VAV), G79, and 112-114 (PFY).

It belongs to the UPF0039 (ElaA) family.

Functionally, could catalyze the transfer of an acetyl group from acetyl coenzyme A (AcCoA) to an acceptor substrate and release both CoA and the acetylated product. The chain is Putative acetyltransferase SAOUHSC_00995 from Staphylococcus aureus (strain NCTC 8325 / PS 47).